Reading from the N-terminus, the 371-residue chain is Maltose/maltodextrin import ATP-binding protein MalK (371 aa).

An ABC transporter domain is found at 4 to 234 (VQLQNVTKAW…PADRFVAGFI (231 aa)). 36 to 43 (GPSGCGKS) provides a ligand contact to ATP.

The protein belongs to the ABC transporter superfamily. Maltooligosaccharide importer (TC 3.A.1.1.1) family. The complex is composed of two ATP-binding proteins (MalK), two transmembrane proteins (MalG and MalK) and a solute-binding protein (MalE).

Its subcellular location is the cell inner membrane. It carries out the reaction D-maltose(out) + ATP + H2O = D-maltose(in) + ADP + phosphate + H(+). Functionally, part of the ABC transporter complex MalEFGK involved in maltose/maltodextrin import. Responsible for energy coupling to the transport system. In Shigella flexneri serotype 5b (strain 8401), this protein is Maltose/maltodextrin import ATP-binding protein MalK.